The sequence spans 347 residues: Phosphate acyltransferase (347 aa).

Belongs to the PlsX family. As to quaternary structure, homodimer. Probably interacts with PlsY.

The protein resides in the cytoplasm. It catalyses the reaction a fatty acyl-[ACP] + phosphate = an acyl phosphate + holo-[ACP]. It participates in lipid metabolism; phospholipid metabolism. Catalyzes the reversible formation of acyl-phosphate (acyl-PO(4)) from acyl-[acyl-carrier-protein] (acyl-ACP). This enzyme utilizes acyl-ACP as fatty acyl donor, but not acyl-CoA. The chain is Phosphate acyltransferase from Pediococcus pentosaceus (strain ATCC 25745 / CCUG 21536 / LMG 10740 / 183-1w).